A 108-amino-acid polypeptide reads, in one-letter code: UPF0060 membrane protein Mfla_0485 (108 aa).

A run of 4 helical transmembrane segments spans residues 7 to 27, 33 to 53, 63 to 83, and 87 to 107; these read FSLFILTALAEILGCYLPYLW, SVWLLLPAAISLAVFAWLLSL, AAYGGVYIFVALGWLWLVDGI, and TWDFVGVGVALAGMAIIMFAP.

The protein belongs to the UPF0060 family.

It localises to the cell inner membrane. This is UPF0060 membrane protein Mfla_0485 from Methylobacillus flagellatus (strain ATCC 51484 / DSM 6875 / VKM B-1610 / KT).